The following is a 129-amino-acid chain: MKYFVVALALVAAFACIAESKPAESEHELAEVEEENELADLEDAVWLEHLADLSDLEEARGFFGNTWKKIKGKADKIMLKKAVKIMVKKEGISKEEAQAKVDAMSKKQIRLYLLKYYGKKALQKASEKL.

The N-terminal stretch at 1-20 (MKYFVVALALVAAFACIAES) is a signal peptide. The propeptide occupies 21-60 (KPAESEHELAEVEEENELADLEDAVWLEHLADLSDLEEAR). Residues 57 to 60 (EEAR) carry the Processing quadruplet motif motif.

It belongs to the cationic peptide 06 (cytoinsectotoxin) family. In terms of processing, cleavage of the propeptide depends on the processing quadruplet motif (XXXR, with at least one of X being E). As to expression, expressed by the venom gland.

The protein resides in the secreted. Insecticidal, cytolytic and antimicrobial peptide. Has insecticidal activity against the flesh fly S.carnaria, and against the cockroach N.cinerea. Has insecticidal activity against D.melanogaster. Has hemolytic activity against human erythrocytes (EC(50)=6 uM). Has cytolytic activity against insect Sf9 cells (EC(50)=1 uM) and human leukocytes (EC(50)=3 uM). Has antibacterial activity against the Gram-positive bacteria A.globiformis VKM Ac-1112 (MIC=0.5 uM), and B.subtilis VKM B-501 (MIC=0.6-0.9 uM), and against the Gram-negative bacteria E.coli C600 (MIC=0.5 uM), E.coli DH5alpha (MIC=0.9 uM), E.coli MH1 (MIC=0.5 uM), P.aeruginosa PAO1 (MIC=1.9 uM), and P.fluorescens VKM B-894 (MIC=3.8 uM). Lacks antimicrobial activity against the Gram-positive bacteria M.luteus and S.aureus, and against the Gram-negative bacterium S.marcescens. Forms voltage-dependent, ion-permeable channels in membranes. At high concentration causes cell membrane lysis. This chain is M-zodatoxin-Lt8a (cit 1-1), found in Lachesana tarabaevi (Spider).